A 105-amino-acid chain; its full sequence is N(4)-acetylcytidine amidohydrolase (105 aa).

Residues 7–93 enclose the ASCH domain; the sequence is TFFERFEHDI…VIAEIYPGLE (87 aa). Catalysis depends on lysine 21, which acts as the Proton acceptor. Threonine 24 functions as the Nucleophile in the catalytic mechanism. The active-site Proton donor is the glutamate 74.

The protein belongs to the N(4)-acetylcytidine amidohydrolase family.

The enzyme catalyses N(4)-acetylcytidine + H2O = cytidine + acetate + H(+). The catalysed reaction is N(4)-acetyl-2'-deoxycytidine + H2O = 2'-deoxycytidine + acetate + H(+). It catalyses the reaction N(4)-acetylcytosine + H2O = cytosine + acetate + H(+). Its function is as follows. Catalyzes the hydrolysis of N(4)-acetylcytidine (ac4C). This chain is N(4)-acetylcytidine amidohydrolase, found in Shewanella baltica (strain OS185).